Reading from the N-terminus, the 77-residue chain is Acyl carrier protein (77 aa).

One can recognise a Carrier domain in the interval 2 to 77 (AEVLEKVTKI…DAVKYIEANA (76 aa)). S37 is modified (O-(pantetheine 4'-phosphoryl)serine).

This sequence belongs to the acyl carrier protein (ACP) family. 4'-phosphopantetheine is transferred from CoA to a specific serine of apo-ACP by AcpS. This modification is essential for activity because fatty acids are bound in thioester linkage to the sulfhydryl of the prosthetic group.

It localises to the cytoplasm. Its pathway is lipid metabolism; fatty acid biosynthesis. In terms of biological role, carrier of the growing fatty acid chain in fatty acid biosynthesis. The chain is Acyl carrier protein from Listeria innocua serovar 6a (strain ATCC BAA-680 / CLIP 11262).